We begin with the raw amino-acid sequence, 411 residues long: Glutamate dehydrogenase (411 aa).

The active site involves K102.

It belongs to the Glu/Leu/Phe/Val dehydrogenases family.

The enzyme catalyses L-glutamate + NAD(+) + H2O = 2-oxoglutarate + NH4(+) + NADH + H(+). The catalysed reaction is L-glutamate + NADP(+) + H2O = 2-oxoglutarate + NH4(+) + NADPH + H(+). The chain is Glutamate dehydrogenase (GDH1) from Zea mays (Maize).